The primary structure comprises 241 residues: Type III pantothenate kinase (241 aa).

6-13 lines the ATP pocket; sequence DVGNTRIK. 94-97 serves as a coordination point for substrate; that stretch reads GIDR. The active-site Proton acceptor is Asp-96. Asp-117 contacts K(+). Thr-120 lines the ATP pocket. Thr-172 serves as a coordination point for substrate.

This sequence belongs to the type III pantothenate kinase family. Homodimer. NH4(+) is required as a cofactor. It depends on K(+) as a cofactor.

The protein localises to the cytoplasm. The catalysed reaction is (R)-pantothenate + ATP = (R)-4'-phosphopantothenate + ADP + H(+). It participates in cofactor biosynthesis; coenzyme A biosynthesis; CoA from (R)-pantothenate: step 1/5. Functionally, catalyzes the phosphorylation of pantothenate (Pan), the first step in CoA biosynthesis. The protein is Type III pantothenate kinase of Flavobacterium psychrophilum (strain ATCC 49511 / DSM 21280 / CIP 103535 / JIP02/86).